We begin with the raw amino-acid sequence, 328 residues long: DNA-directed RNA polymerase subunit alpha (328 aa).

The segment at 1-232 (MSTQGFLKPR…DQISVFAALE (232 aa)) is alpha N-terminal domain (alpha-NTD). The tract at residues 248–328 (IDPVLLRPVD…NWPPLGLERP (81 aa)) is alpha C-terminal domain (alpha-CTD).

Belongs to the RNA polymerase alpha chain family. In terms of assembly, homodimer. The RNAP catalytic core consists of 2 alpha, 1 beta, 1 beta' and 1 omega subunit. When a sigma factor is associated with the core the holoenzyme is formed, which can initiate transcription.

The enzyme catalyses RNA(n) + a ribonucleoside 5'-triphosphate = RNA(n+1) + diphosphate. DNA-dependent RNA polymerase catalyzes the transcription of DNA into RNA using the four ribonucleoside triphosphates as substrates. This chain is DNA-directed RNA polymerase subunit alpha, found in Bordetella bronchiseptica (strain ATCC BAA-588 / NCTC 13252 / RB50) (Alcaligenes bronchisepticus).